A 115-amino-acid chain; its full sequence is MSSPQKTSLAARRRAERMSREAMYEVIRSPLITEKATLLSERSQVVFRVAIDATKPEIKAAVEGLFGVKVIGVNTLVNKGKTKRFRGRPGQRSDVKKAYVQLVAGQAIDLTAKLA.

It belongs to the universal ribosomal protein uL23 family. As to quaternary structure, part of the 50S ribosomal subunit. Contacts protein L29, and trigger factor when it is bound to the ribosome.

Functionally, one of the early assembly proteins it binds 23S rRNA. One of the proteins that surrounds the polypeptide exit tunnel on the outside of the ribosome. Forms the main docking site for trigger factor binding to the ribosome. The sequence is that of Large ribosomal subunit protein uL23 from Granulibacter bethesdensis (strain ATCC BAA-1260 / CGDNIH1).